A 331-amino-acid chain; its full sequence is Glucokinase (331 aa).

16-21 (GDIGGT) contacts ATP.

Belongs to the bacterial glucokinase family.

It is found in the cytoplasm. It catalyses the reaction D-glucose + ATP = D-glucose 6-phosphate + ADP + H(+). The polypeptide is Glucokinase (Pseudomonas aeruginosa (strain LESB58)).